The following is a 92-amino-acid chain: Probable Fe(2+)-trafficking protein (92 aa).

The protein belongs to the Fe(2+)-trafficking protein family.

Could be a mediator in iron transactions between iron acquisition and iron-requiring processes, such as synthesis and/or repair of Fe-S clusters in biosynthetic enzymes. The chain is Probable Fe(2+)-trafficking protein from Anaeromyxobacter sp. (strain Fw109-5).